A 504-amino-acid polypeptide reads, in one-letter code: Maturase K (504 aa).

The protein belongs to the intron maturase 2 family. MatK subfamily.

It is found in the plastid. The protein resides in the chloroplast. Its function is as follows. Usually encoded in the trnK tRNA gene intron. Probably assists in splicing its own and other chloroplast group II introns. In Barbarea vulgaris (Yellow rocket), this protein is Maturase K.